Reading from the N-terminus, the 327-residue chain is Nuclear apoptosis-inducing factor 1 (327 aa).

Residues Met-1–Lys-70 are required for nuclear localization and apoptosis-inducing activity. The span at Arg-87–Pro-98 shows a compositional bias: low complexity. 2 disordered regions span residues Arg-87 to Pro-118 and Asn-303 to Gln-327. Gly residues predominate over residues Ala-104–Pro-118. The span at Val-316–Gln-327 shows a compositional bias: polar residues.

This sequence belongs to the NAIF1 family. Interacts with HARBI1. Widely expressed.

It localises to the nucleus. In terms of biological role, induces apoptosis. This Homo sapiens (Human) protein is Nuclear apoptosis-inducing factor 1 (NAIF1).